The following is a 67-amino-acid chain: UPF0253 protein VV2574 (67 aa).

This sequence belongs to the UPF0253 family.

The sequence is that of UPF0253 protein VV2574 from Vibrio vulnificus (strain YJ016).